The chain runs to 285 residues: Golgi phosphoprotein 3-like (285 aa).

Positions 1-39 (MTTLTHRARRTEVGKNSEKKVESEENVNQDRNQDNEDIG) are disordered. The span at 10 to 23 (RTEVGKNSEKKVES) shows a compositional bias: basic and acidic residues. A 1,2-diacyl-sn-glycero-3-phospho-(1D-myo-inositol 4-phosphate)-binding residues include Trp-67 and Arg-76. Ser-112 bears the Phosphoserine mark. The a 1,2-diacyl-sn-glycero-3-phospho-(1D-myo-inositol 4-phosphate) site is built by Arg-157 and Arg-160. Positions 176 to 187 (EKQNFLLFDMTT) are beta-hairpin required for oligomerization.

It belongs to the GOLPH3/VPS74 family. As to quaternary structure, homooligomer. Does not interact MYO18; differs from GOLPH3 by its inability to interact with MYO18. May interact with ARF1.

The protein localises to the golgi apparatus. It is found in the golgi stack membrane. The protein resides in the trans-Golgi network membrane. Functionally, phosphatidylinositol-4-phosphate-binding protein that may antagonize the action of GOLPH3 which is required for the process of vesicle budding at the Golgi and anterograde transport to the plasma membrane. This is Golgi phosphoprotein 3-like (GOLPH3L) from Bos taurus (Bovine).